A 510-amino-acid chain; its full sequence is uncharacterized protein (510 aa).

Helical transmembrane passes span 17 to 37 (LKLG…LVVL), 56 to 76 (LIIH…ASVW), 111 to 131 (VLYI…ISPL), 148 to 168 (IVFI…AINI), 180 to 200 (LVNV…VCFG), 223 to 243 (LLFW…LIFI), 261 to 281 (FYLF…FGHI), 300 to 320 (YLGG…LVLM), 355 to 375 (IIKT…LIAI), 382 to 402 (LVIP…CMGY), 434 to 454 (AIYL…FSGI), and 472 to 492 (LLMG…LMFV).

The protein to A.aeolicus AQ_155.

The protein localises to the cell membrane. This is an uncharacterized protein from Rickettsia prowazekii (strain Madrid E).